The following is a 243-amino-acid chain: Collagen triple helix repeat-containing protein 1 (243 aa).

The first 30 residues, 1 to 30 (MRPQGPAASPQRLRGLLLLLLLQLPAPSSA), serve as a signal peptide directing secretion. One can recognise a Collagen-like domain in the interval 57–90 (QGPAGVPGRDGSPGANGIPGTPGIPGRDGFKGEK). The disordered stretch occupies residues 62 to 85 (VPGRDGSPGANGIPGTPGIPGRDG). Asn186 carries an N-linked (GlcNAc...) asparagine glycan.

N-glycosylated. Isoform 1 is expressed in calcified atherosclerotic plaque and chondrocyte-like cells.

It is found in the secreted. Its subcellular location is the extracellular space. The protein localises to the extracellular matrix. Its function is as follows. May act as a negative regulator of collagen matrix deposition. This chain is Collagen triple helix repeat-containing protein 1 (CTHRC1), found in Homo sapiens (Human).